The primary structure comprises 56 residues: Large ribosomal subunit protein uL30 (56 aa).

This sequence belongs to the universal ribosomal protein uL30 family. In terms of assembly, part of the 50S ribosomal subunit.

This Oleidesulfovibrio alaskensis (strain ATCC BAA-1058 / DSM 17464 / G20) (Desulfovibrio alaskensis) protein is Large ribosomal subunit protein uL30.